A 346-amino-acid polypeptide reads, in one-letter code: Cyclin-dependent kinase 20 (346 aa).

The 285-residue stretch at 4–288 (YCILGRIGEG…ASKALLHQYF (285 aa)) folds into the Protein kinase domain. Residues 10–18 (IGEGAHGIV) and Lys-33 contribute to the ATP site. Residue Asp-127 is the Proton acceptor of the active site.

Belongs to the protein kinase superfamily. CMGC Ser/Thr protein kinase family. CDC2/CDKX subfamily. As to quaternary structure, monomer. Interacts with TBC1D32. Interacts with MAK.

Its subcellular location is the nucleus. The protein resides in the cytoplasm. It is found in the cell projection. It localises to the cilium. It catalyses the reaction L-seryl-[protein] + ATP = O-phospho-L-seryl-[protein] + ADP + H(+). It carries out the reaction L-threonyl-[protein] + ATP = O-phospho-L-threonyl-[protein] + ADP + H(+). Functionally, required for high-level Shh responses in the developing neural tube. Together with TBC1D32, controls the structure of the primary cilium by coordinating assembly of the ciliary membrane and axoneme, allowing GLI2 to be properly activated in response to SHH signaling. Involved in cell growth. Activates CDK2, a kinase involved in the control of the cell cycle, by phosphorylating residue 'Thr-160'. The polypeptide is Cyclin-dependent kinase 20 (CDK20) (Homo sapiens (Human)).